The primary structure comprises 147 residues: Protein archease (147 aa).

Positions 17, 146, and 147 each coordinate Ca(2+).

Belongs to the archease family.

Activates the tRNA-splicing ligase complex by facilitating the enzymatic turnover of catalytic subunit RtcB. Acts by promoting the guanylylation of RtcB, a key intermediate step in tRNA ligation. Can also alter the NTP specificity of RtcB such that ATP, dGTP or ITP is used efficiently. The protein is Protein archease of Pyrobaculum calidifontis (strain DSM 21063 / JCM 11548 / VA1).